The chain runs to 138 residues: Extracellular glycoprotein lacritin (138 aa).

Residues 1–19 (MKFTTLLFLAAVAGALVYA) form the signal peptide. The segment at 20-79 (EDASSDSTGADPAQEAGTSKPNEEISGPAEPASPPETTTTAQETSAAAVQGTAKVTSSRQ) is disordered. Over residues 43–67 (EISGPAEPASPPETTTTAQETSAAA) the composition is skewed to low complexity. Asn-119 is a glycosylation site (N-linked (GlcNAc...) asparagine).

In terms of tissue distribution, expressed in secretory granules of many acinar cells in lacrimal gland and in scattered acinar cells of salivary glands.

It is found in the secreted. Its function is as follows. Modulates secretion by lacrimal acinar cells. The protein is Extracellular glycoprotein lacritin (LACRT) of Homo sapiens (Human).